A 133-amino-acid polypeptide reads, in one-letter code: Putative pre-16S rRNA nuclease (133 aa).

It belongs to the YqgF nuclease family.

It is found in the cytoplasm. Its function is as follows. Could be a nuclease involved in processing of the 5'-end of pre-16S rRNA. The polypeptide is Putative pre-16S rRNA nuclease (Alcanivorax borkumensis (strain ATCC 700651 / DSM 11573 / NCIMB 13689 / SK2)).